Reading from the N-terminus, the 385-residue chain is Arginine biosynthesis bifunctional protein ArgJ (385 aa).

Thr142, Lys168, Thr179, Glu259, Asn380, and Thr385 together coordinate substrate. The active-site Nucleophile is Thr179.

Belongs to the ArgJ family. In terms of assembly, heterotetramer of two alpha and two beta chains.

It localises to the cytoplasm. It carries out the reaction N(2)-acetyl-L-ornithine + L-glutamate = N-acetyl-L-glutamate + L-ornithine. The enzyme catalyses L-glutamate + acetyl-CoA = N-acetyl-L-glutamate + CoA + H(+). The protein operates within amino-acid biosynthesis; L-arginine biosynthesis; L-ornithine and N-acetyl-L-glutamate from L-glutamate and N(2)-acetyl-L-ornithine (cyclic): step 1/1. Its pathway is amino-acid biosynthesis; L-arginine biosynthesis; N(2)-acetyl-L-ornithine from L-glutamate: step 1/4. In terms of biological role, catalyzes two activities which are involved in the cyclic version of arginine biosynthesis: the synthesis of N-acetylglutamate from glutamate and acetyl-CoA as the acetyl donor, and of ornithine by transacetylation between N(2)-acetylornithine and glutamate. The sequence is that of Arginine biosynthesis bifunctional protein ArgJ from Leptospira interrogans serogroup Icterohaemorrhagiae serovar copenhageni (strain Fiocruz L1-130).